The sequence spans 322 residues: Tetrahydromethanopterin S-methyltransferase subunit H (322 aa).

The protein belongs to the MtrH family. In terms of assembly, the complex is composed of 8 subunits; MtrA, MtrB, MtrC, MtrD, MtrE, MtrF, MtrG and MtrH.

The catalysed reaction is 5-methyl-5,6,7,8-tetrahydromethanopterin + coenzyme M + 2 Na(+)(in) = 5,6,7,8-tetrahydromethanopterin + methyl-coenzyme M + 2 Na(+)(out). It functions in the pathway one-carbon metabolism; methanogenesis from CO(2); methyl-coenzyme M from 5,10-methylene-5,6,7,8-tetrahydromethanopterin: step 2/2. Functionally, part of a complex that catalyzes the formation of methyl-coenzyme M and tetrahydromethanopterin from coenzyme M and methyl-tetrahydromethanopterin. This is an energy-conserving, sodium-ion translocating step. MtrH catalyzes the transfer of the methyl group from methyl-tetrahydromethanopterin to the corrinoid prosthetic group of MtrA. The chain is Tetrahydromethanopterin S-methyltransferase subunit H from Methanopyrus kandleri (strain AV19 / DSM 6324 / JCM 9639 / NBRC 100938).